A 1134-amino-acid chain; its full sequence is Ankyrin repeat and SAM domain-containing protein 1A (1134 aa).

The residue at position 2 (Gly-2) is an N-acetylglycine. A compositionally biased stretch (gly residues) spans Gly-33–Gly-55. The segment at Gly-33 to Ser-57 is disordered. ANK repeat units follow at residues Thr-79 to Val-108, Lys-112 to Arg-141, Asp-148 to Met-177, Lys-181 to Ser-210, Lys-214 to Tyr-243, and Glu-246 to Ile-275. Basic and acidic residues predominate over residues His-305–Lys-317. Disordered regions lie at residues His-305–Gly-338, Ser-375–His-422, and Val-469–Gln-498. Thr-318 carries the phosphothreonine modification. The span at Ser-328–Gln-337 shows a compositional bias: polar residues. Residues Ser-382–Glu-392 show a composition bias toward basic and acidic residues. Residue Ser-507 is modified to Phosphoserine. The tract at residues Leu-569–Asn-650 is disordered. Residues Leu-572 to Ala-588 are compositionally biased toward polar residues. The span at Pro-613–Ser-628 shows a compositional bias: basic and acidic residues. Ser-620, Ser-622, Ser-624, Ser-626, Ser-628, Ser-647, Ser-661, Ser-663, Ser-666, and Ser-677 each carry phosphoserine. Residues Cys-633–Asn-650 show a composition bias toward polar residues. 2 SAM domains span residues Thr-696–Val-762 and Asn-770–Pro-837. Residues Thr-856–Gly-868 show a composition bias toward polar residues. Disordered stretches follow at residues Thr-856 to Arg-896 and Ala-1079 to Asn-1134. Ser-887 carries the phosphoserine modification. The region spanning Ile-936–Pro-1091 is the PID domain. Over residues Pro-1123–Asn-1134 the composition is skewed to basic and acidic residues.

Interacts (via SAM domain) with EPHA2 (via SAM domain). Interacts with EPHA8; EPHA8 kinase activity-independent but stimulated by EPHA8 ubiquitination. Interacts (via SAM domain) with EPHA6 (via SAM domain). Post-translationally, phosphorylated on tyrosine residues in response to EGF and PDGF. As to expression, widely expressed (at protein level).

The protein resides in the cytoplasm. The protein localises to the cell projection. Regulator of different signaling pathways. Regulates EPHA8 receptor tyrosine kinase signaling to control cell migration and neurite retraction. The protein is Ankyrin repeat and SAM domain-containing protein 1A (ANKS1A) of Homo sapiens (Human).